The primary structure comprises 377 residues: Heat stress transcription factor B-2b (377 aa).

Residues Met-1–Ile-56 form a disordered region. The segment covering Gly-14–Asp-51 has biased composition (gly residues). Residues Pro-57 to Ile-151 mediate DNA binding. The hydrophobic repeat HR-A/B stretch occupies residues Thr-220 to Thr-265. Residues Lys-323–Arg-327 carry the Nuclear localization signal motif. Residues Arg-326–Lys-377 form a disordered region. The segment covering Leu-331–Asp-340 has biased composition (acidic residues).

The protein belongs to the HSF family. Class B subfamily. Homotrimer. Post-translationally, exhibits temperature-dependent phosphorylation.

The protein resides in the nucleus. Functionally, transcriptional regulator that specifically binds DNA sequence 5'-AGAAnnTTCT-3' known as heat shock promoter elements (HSE). This chain is Heat stress transcription factor B-2b (HSFB2B), found in Arabidopsis thaliana (Mouse-ear cress).